A 479-amino-acid chain; its full sequence is Serine palmitoyltransferase 1 (479 aa).

Over 1-16 (MFLFDIYNNILYYTKE) the chain is Lumenal. The chain crosses the membrane as a helical span at residues 17-37 (FIVTSTSPNLFIHGLMAVFII). Residues 38-479 (YLLTKRPFKP…KCTSFVLESN (442 aa)) are Cytoplasmic-facing.

The protein belongs to the class-II pyridoxal-phosphate-dependent aminotransferase family. In terms of assembly, forms a heterodimer with sptB. Pyridoxal 5'-phosphate serves as cofactor.

The protein localises to the endoplasmic reticulum membrane. The enzyme catalyses L-serine + hexadecanoyl-CoA + H(+) = 3-oxosphinganine + CO2 + CoA. The protein operates within lipid metabolism; sphingolipid metabolism. In terms of biological role, component of serine palmitoyltransferase (SPT), which catalyzes the committed step in the synthesis of sphingolipids, the condensation of serine with palmitoyl CoA to form the long chain base 3-ketosphinganine. The polypeptide is Serine palmitoyltransferase 1 (sptA) (Dictyostelium discoideum (Social amoeba)).